Here is a 268-residue protein sequence, read N- to C-terminus: Small ribosomal subunit protein uS3 (268 aa).

The region spanning 40–110 (IRNLFFINYR…KLDLTINEIG (71 aa)) is the KH type-2 domain.

The protein belongs to the universal ribosomal protein uS3 family. As to quaternary structure, part of the 30S ribosomal subunit. Forms a tight complex with proteins S10 and S14.

Its function is as follows. Binds the lower part of the 30S subunit head. Binds mRNA in the 70S ribosome, positioning it for translation. The chain is Small ribosomal subunit protein uS3 from Mycoplasma genitalium (strain ATCC 33530 / DSM 19775 / NCTC 10195 / G37) (Mycoplasmoides genitalium).